Reading from the N-terminus, the 170-residue chain is MPLELVQGDIAHQPVDAVVTAANKQLMGGGGVDGVIHRAAGPRLLQAIRPIGGTPTGTAVITPAFDLERQGVKYVIHAVGPIWRGGQHGEAELLAGAYRESLRLGVENGCRSVAFPSISTGVYGYPLDRAAPIALATIQDFLRSHPDLSVRMVLYGADALHVFERALAQL.

Residues 1 to 170 (MPLELVQGDI…HVFERALAQL (170 aa)) enclose the Macro domain.

It belongs to the MacroD-type family.

The chain is Macro domain-containing protein DR_2288 from Deinococcus radiodurans (strain ATCC 13939 / DSM 20539 / JCM 16871 / CCUG 27074 / LMG 4051 / NBRC 15346 / NCIMB 9279 / VKM B-1422 / R1).